Consider the following 234-residue polypeptide: Cell polarity protein alp11 (234 aa).

The 85-residue stretch at 4–88 (ITLFIKSSSA…IVVEDTRPPH (85 aa)) folds into the Ubiquitin-like domain. The CAP-Gly domain occupies 174–216 (VPEINNDNLWVGVEFDEPVGKNDGTVSGKRYFNAKNKHGSFLR). Ser213 carries the post-translational modification Phosphoserine.

The protein belongs to the TBCB family. As to quaternary structure, binds to monomeric alpha-tubulin. Interacts with alp21.

It is found in the cytoplasm. The protein resides in the cytoskeleton. Functionally, required for microtubule function and cell polarity. Involved in the proper folding of alpha-tubulin. The polypeptide is Cell polarity protein alp11 (alp11) (Schizosaccharomyces pombe (strain 972 / ATCC 24843) (Fission yeast)).